A 197-amino-acid chain; its full sequence is Chitin synthase 3 (197 aa).

It belongs to the chitin synthase family. Class III subfamily.

It localises to the cell membrane. The catalysed reaction is [(1-&gt;4)-N-acetyl-beta-D-glucosaminyl](n) + UDP-N-acetyl-alpha-D-glucosamine = [(1-&gt;4)-N-acetyl-beta-D-glucosaminyl](n+1) + UDP + H(+). Functionally, polymerizes chitin, a structural polymer of the cell wall and septum, by transferring the sugar moiety of UDP-GlcNAc to the non-reducing end of the growing chitin polymer. The chain is Chitin synthase 3 (CHS3) from Exophiala jeanselmei (Dematiaceous fungus).